Consider the following 183-residue polypeptide: Adenine phosphoribosyltransferase (183 aa).

It belongs to the purine/pyrimidine phosphoribosyltransferase family. In terms of assembly, homodimer.

It is found in the cytoplasm. It catalyses the reaction AMP + diphosphate = 5-phospho-alpha-D-ribose 1-diphosphate + adenine. It functions in the pathway purine metabolism; AMP biosynthesis via salvage pathway; AMP from adenine: step 1/1. Functionally, catalyzes a salvage reaction resulting in the formation of AMP, that is energically less costly than de novo synthesis. This chain is Adenine phosphoribosyltransferase, found in Shewanella pealeana (strain ATCC 700345 / ANG-SQ1).